The chain runs to 529 residues: Glucose-6-phosphate isomerase (529 aa).

The active-site Proton donor is Glu-322. Active-site residues include His-351 and Lys-455.

The protein belongs to the GPI family.

It is found in the cytoplasm. It carries out the reaction alpha-D-glucose 6-phosphate = beta-D-fructose 6-phosphate. It functions in the pathway carbohydrate biosynthesis; gluconeogenesis. It participates in carbohydrate degradation; glycolysis; D-glyceraldehyde 3-phosphate and glycerone phosphate from D-glucose: step 2/4. Functionally, catalyzes the reversible isomerization of glucose-6-phosphate to fructose-6-phosphate. This chain is Glucose-6-phosphate isomerase, found in Cyanothece sp. (strain PCC 7425 / ATCC 29141).